Here is a 465-residue protein sequence, read N- to C-terminus: Alpha-galacturonidase (465 aa).

An NAD(+)-binding site is contributed by 11 to 78 (ITIAYIGGGS…GKWLYKACET (68 aa)). Asn-157 serves as a coordination point for substrate. Position 179 (Cys-179) interacts with Mn(2+). His-180 acts as the Proton donor in catalysis. His-216 is a binding site for Mn(2+).

The protein belongs to the glycosyl hydrolase 4 family. In terms of assembly, homotetramer. NAD(+) serves as cofactor. It depends on Mn(2+) as a cofactor.

It carries out the reaction [(1-&gt;4)-alpha-D-galacturonosyl](n) + H2O = alpha-D-galacturonate + [(1-&gt;4)-alpha-D-galacturonosyl](n-1). In terms of biological role, alpha-galacturonidase able to catalyze the hydrolysis of the chromogenic substrate p-nitrophenyl-alpha-D-galacturonic acid (pNPalphaGalUA). It is probable that alpha-1,4-di-galacturonate (GalUA(2)) is the naturally occurring substrate. The polypeptide is Alpha-galacturonidase (Thermoanaerobacterium saccharolyticum (strain DSM 8691 / JW/SL-YS485)).